The primary structure comprises 257 residues: MNPLIIKLGGVLLDSEEALERLFTALVNYRESHQRPLVIVHGGGCVVDELMKGLNLPVKKKDGLRVTPADQIGIITGALAGTANKTLLAWAKKHHIASVGLFLGDGDSVNVTQLNEALGHVGLAQPGSPKLINMLLENGFLPVVSSIGVTDDGQLMNVNADQAATALAATLGADLILLSDVSGILDGKGQRIAEMTASKAEQLIDQGIITDGMIVKVNAALDAARALGRPVDIASWRHAEQLPALFNGTPIGTRILA.

Substrate-binding positions include 43–44 (GG), arginine 65, and asparagine 157. Residues 180-185 (DVSGIL) and 208-210 (IIT) contribute to the ATP site.

Belongs to the acetylglutamate kinase family. ArgB subfamily. As to quaternary structure, homodimer.

Its subcellular location is the cytoplasm. The catalysed reaction is N-acetyl-L-glutamate + ATP = N-acetyl-L-glutamyl 5-phosphate + ADP. Its pathway is amino-acid biosynthesis; L-arginine biosynthesis; N(2)-acetyl-L-ornithine from L-glutamate: step 2/4. Its function is as follows. Catalyzes the ATP-dependent phosphorylation of N-acetyl-L-glutamate. This Salmonella paratyphi B (strain ATCC BAA-1250 / SPB7) protein is Acetylglutamate kinase.